Here is a 278-residue protein sequence, read N- to C-terminus: Elongation factor Ts (278 aa).

The interval 79–82 (TDFV) is involved in Mg(2+) ion dislocation from EF-Tu.

This sequence belongs to the EF-Ts family.

It is found in the cytoplasm. Associates with the EF-Tu.GDP complex and induces the exchange of GDP to GTP. It remains bound to the aminoacyl-tRNA.EF-Tu.GTP complex up to the GTP hydrolysis stage on the ribosome. This chain is Elongation factor Ts, found in Borrelia duttonii (strain Ly).